The chain runs to 545 residues: Tyrosine decarboxylase 2 (545 aa).

The segment covering 23–44 (GYTNGNGHTNGNGNYNGNGHVN) has biased composition (gly residues). The interval 23–45 (GYTNGNGHTNGNGNYNGNGHVNG) is disordered. The L-tyrosine site is built by histidine 245 and histidine 360. N6-(pyridoxal phosphate)lysine is present on lysine 361. Position 390 (tyrosine 390) interacts with L-tyrosine.

Belongs to the group II decarboxylase family. Homotetramer. It depends on pyridoxal 5'-phosphate as a cofactor. In terms of tissue distribution, expressed specifically in flowers.

The protein resides in the cytoplasm. It catalyses the reaction L-tyrosine + H(+) = tyramine + CO2. Converts tyrosine into tyramine, a precursor of isoquinoline alkaloids and various amides. This chain is Tyrosine decarboxylase 2, found in Arabidopsis thaliana (Mouse-ear cress).